The primary structure comprises 253 residues: Triosephosphate isomerase (253 aa).

9–11 (NWK) contributes to the substrate binding site. H95 functions as the Electrophile in the catalytic mechanism. The active-site Proton acceptor is the E167. Residues G173, S213, and 234–235 (GG) each bind substrate. Residue S213 is modified to Phosphoserine.

This sequence belongs to the triosephosphate isomerase family. In terms of assembly, homodimer.

Its subcellular location is the cytoplasm. The enzyme catalyses D-glyceraldehyde 3-phosphate = dihydroxyacetone phosphate. It participates in carbohydrate biosynthesis; gluconeogenesis. The protein operates within carbohydrate degradation; glycolysis; D-glyceraldehyde 3-phosphate from glycerone phosphate: step 1/1. Functionally, involved in the gluconeogenesis. Catalyzes stereospecifically the conversion of dihydroxyacetone phosphate (DHAP) to D-glyceraldehyde-3-phosphate (G3P). This Bacillus licheniformis (strain ATCC 14580 / DSM 13 / JCM 2505 / CCUG 7422 / NBRC 12200 / NCIMB 9375 / NCTC 10341 / NRRL NRS-1264 / Gibson 46) protein is Triosephosphate isomerase.